Here is a 183-residue protein sequence, read N- to C-terminus: ATP synthase subunit b 2 (183 aa).

Residues 27-47 (PSFYAFLALLIFFGLLLHMGV) traverse the membrane as a helical segment.

It belongs to the ATPase B chain family. In terms of assembly, F-type ATPases have 2 components, F(1) - the catalytic core - and F(0) - the membrane proton channel. F(1) has five subunits: alpha(3), beta(3), gamma(1), delta(1), epsilon(1). F(0) has three main subunits: a(1), b(2) and c(10-14). The alpha and beta chains form an alternating ring which encloses part of the gamma chain. F(1) is attached to F(0) by a central stalk formed by the gamma and epsilon chains, while a peripheral stalk is formed by the delta and b chains.

The protein resides in the cell inner membrane. Its function is as follows. F(1)F(0) ATP synthase produces ATP from ADP in the presence of a proton or sodium gradient. F-type ATPases consist of two structural domains, F(1) containing the extramembraneous catalytic core and F(0) containing the membrane proton channel, linked together by a central stalk and a peripheral stalk. During catalysis, ATP synthesis in the catalytic domain of F(1) is coupled via a rotary mechanism of the central stalk subunits to proton translocation. Component of the F(0) channel, it forms part of the peripheral stalk, linking F(1) to F(0). The protein is ATP synthase subunit b 2 of Maricaulis maris (strain MCS10) (Caulobacter maris).